The following is a 193-amino-acid chain: Fe/S biogenesis protein NfuA (193 aa).

C150 and C153 together coordinate [4Fe-4S] cluster.

It belongs to the NfuA family. As to quaternary structure, homodimer. [4Fe-4S] cluster is required as a cofactor.

Its function is as follows. Involved in iron-sulfur cluster biogenesis. Binds a 4Fe-4S cluster, can transfer this cluster to apoproteins, and thereby intervenes in the maturation of Fe/S proteins. Could also act as a scaffold/chaperone for damaged Fe/S proteins. This chain is Fe/S biogenesis protein NfuA, found in Histophilus somni (strain 129Pt) (Haemophilus somnus).